The following is a 196-amino-acid chain: ATP-dependent Clp protease proteolytic subunit (196 aa).

The active-site Nucleophile is serine 101. Histidine 126 is an active-site residue.

Belongs to the peptidase S14 family. As to quaternary structure, component of the chloroplastic Clp protease core complex.

The protein resides in the plastid. The protein localises to the chloroplast stroma. The enzyme catalyses Hydrolysis of proteins to small peptides in the presence of ATP and magnesium. alpha-casein is the usual test substrate. In the absence of ATP, only oligopeptides shorter than five residues are hydrolyzed (such as succinyl-Leu-Tyr-|-NHMec, and Leu-Tyr-Leu-|-Tyr-Trp, in which cleavage of the -Tyr-|-Leu- and -Tyr-|-Trp bonds also occurs).. Its function is as follows. Cleaves peptides in various proteins in a process that requires ATP hydrolysis. Has a chymotrypsin-like activity. Plays a major role in the degradation of misfolded proteins. This is ATP-dependent Clp protease proteolytic subunit from Lepidium virginicum (Virginia pepperweed).